We begin with the raw amino-acid sequence, 647 residues long: DNA mismatch repair protein MutL (647 aa).

The segment covering 387–400 has biased composition (basic and acidic residues); it reads SAKPVHEATDEKAE. Residues 387-412 are disordered; sequence SAKPVHEATDEKAEPQSTSVKFAERK.

It belongs to the DNA mismatch repair MutL/HexB family.

Its function is as follows. This protein is involved in the repair of mismatches in DNA. It is required for dam-dependent methyl-directed DNA mismatch repair. May act as a 'molecular matchmaker', a protein that promotes the formation of a stable complex between two or more DNA-binding proteins in an ATP-dependent manner without itself being part of a final effector complex. The protein is DNA mismatch repair protein MutL of Streptococcus sanguinis (strain SK36).